A 154-amino-acid chain; its full sequence is MPNTDVSSLSMLGHQTETASSPEEAVLEKVPSNHAGTDYVVRFTAPEFTSLCPMTGQPDFAHIVIDYIPGEWLVESKSLKLFLHSFRNHGAFHEDCSIYIAKRIVELLDPKWLRIGAYWYPRGGIPIDVFWQTGKPPEGVWLPEQGVATYRGRG.

The segment covering 1–21 has biased composition (polar residues); that stretch reads MPNTDVSSLSMLGHQTETASS. Residues 1–26 are disordered; that stretch reads MPNTDVSSLSMLGHQTETASSPEEAV. Catalysis depends on cysteine 52, which acts as the Thioimide intermediate. Catalysis depends on aspartate 59, which acts as the Proton donor. Substrate contacts are provided by residues 74–76 and 93–94; these read VES and HE.

This sequence belongs to the GTP cyclohydrolase I family. QueF type 1 subfamily.

It is found in the cytoplasm. It carries out the reaction 7-aminomethyl-7-carbaguanine + 2 NADP(+) = 7-cyano-7-deazaguanine + 2 NADPH + 3 H(+). The protein operates within tRNA modification; tRNA-queuosine biosynthesis. In terms of biological role, catalyzes the NADPH-dependent reduction of 7-cyano-7-deazaguanine (preQ0) to 7-aminomethyl-7-deazaguanine (preQ1). The protein is NADPH-dependent 7-cyano-7-deazaguanine reductase of Rhizobium etli (strain ATCC 51251 / DSM 11541 / JCM 21823 / NBRC 15573 / CFN 42).